Consider the following 179-residue polypeptide: Large ribosomal subunit protein uL5 (179 aa).

Belongs to the universal ribosomal protein uL5 family. In terms of assembly, part of the 50S ribosomal subunit; part of the 5S rRNA/L5/L18/L25 subcomplex. Contacts the 5S rRNA and the P site tRNA. Forms a bridge to the 30S subunit in the 70S ribosome.

Its function is as follows. This is one of the proteins that bind and probably mediate the attachment of the 5S RNA into the large ribosomal subunit, where it forms part of the central protuberance. In the 70S ribosome it contacts protein S13 of the 30S subunit (bridge B1b), connecting the 2 subunits; this bridge is implicated in subunit movement. Contacts the P site tRNA; the 5S rRNA and some of its associated proteins might help stabilize positioning of ribosome-bound tRNAs. This chain is Large ribosomal subunit protein uL5, found in Staphylococcus epidermidis (strain ATCC 35984 / DSM 28319 / BCRC 17069 / CCUG 31568 / BM 3577 / RP62A).